The following is a 953-amino-acid chain: Isoleucine--tRNA ligase (953 aa).

Residues Pro-58–His-68 carry the 'HIGH' region motif. Residue Glu-573 participates in L-isoleucyl-5'-AMP binding. The short motif at Lys-614 to Ser-618 is the 'KMSKS' region element. Lys-617 is an ATP binding site. Residues Cys-916, Cys-919, Cys-936, and Cys-939 each contribute to the Zn(2+) site.

Belongs to the class-I aminoacyl-tRNA synthetase family. IleS type 1 subfamily. In terms of assembly, monomer. Zn(2+) is required as a cofactor.

It localises to the cytoplasm. It catalyses the reaction tRNA(Ile) + L-isoleucine + ATP = L-isoleucyl-tRNA(Ile) + AMP + diphosphate. In terms of biological role, catalyzes the attachment of isoleucine to tRNA(Ile). As IleRS can inadvertently accommodate and process structurally similar amino acids such as valine, to avoid such errors it has two additional distinct tRNA(Ile)-dependent editing activities. One activity is designated as 'pretransfer' editing and involves the hydrolysis of activated Val-AMP. The other activity is designated 'posttransfer' editing and involves deacylation of mischarged Val-tRNA(Ile). This Blochmanniella floridana protein is Isoleucine--tRNA ligase.